The following is a 574-amino-acid chain: Zinc finger protein 394 (574 aa).

Phosphoserine is present on serine 12. Lysine 40 participates in a covalent cross-link: Glycyl lysine isopeptide (Lys-Gly) (interchain with G-Cter in SUMO2). In terms of domain architecture, SCAN box spans arginine 64–leucine 146. The region spanning valine 155–proline 230 is the KRAB domain. Residues glutamate 182–asparagine 202 form a disordered region. Glycyl lysine isopeptide (Lys-Gly) (interchain with G-Cter in SUMO2) cross-links involve residues lysine 203, lysine 228, and lysine 254. The interval leucine 231–asparagine 284 is disordered. Polar residues predominate over residues asparagine 265 to glycine 274. Lysine 282 participates in a covalent cross-link: Glycyl lysine isopeptide (Lys-Gly) (interchain with G-Cter in SUMO2). C2H2-type zinc fingers lie at residues tyrosine 358–histidine 380, tyrosine 386–histidine 408, tyrosine 414–histidine 436, phenylalanine 442–histidine 463, tyrosine 469–histidine 491, tyrosine 497–histidine 519, and tyrosine 525–histidine 547. Residue lysine 443 forms a Glycyl lysine isopeptide (Lys-Gly) (interchain with G-Cter in SUMO2) linkage.

Belongs to the krueppel C2H2-type zinc-finger protein family.

The protein localises to the nucleus. Functionally, may be involved in transcriptional regulation. The chain is Zinc finger protein 394 (ZNF394) from Pongo abelii (Sumatran orangutan).